A 285-amino-acid polypeptide reads, in one-letter code: 2-dehydro-3-deoxyphosphooctonate aldolase (285 aa).

The protein belongs to the KdsA family.

It is found in the cytoplasm. The catalysed reaction is D-arabinose 5-phosphate + phosphoenolpyruvate + H2O = 3-deoxy-alpha-D-manno-2-octulosonate-8-phosphate + phosphate. Its pathway is carbohydrate biosynthesis; 3-deoxy-D-manno-octulosonate biosynthesis; 3-deoxy-D-manno-octulosonate from D-ribulose 5-phosphate: step 2/3. The protein operates within bacterial outer membrane biogenesis; lipopolysaccharide biosynthesis. The chain is 2-dehydro-3-deoxyphosphooctonate aldolase from Leptothrix cholodnii (strain ATCC 51168 / LMG 8142 / SP-6) (Leptothrix discophora (strain SP-6)).